A 60-amino-acid chain; its full sequence is 5-hydroxytryptamine receptor 2B (60 aa).

At 1-4 the chain is on the extracellular side; it reads VLCP. A helical transmembrane segment spans residues 5-26; sequence AWLFLDVLFSTASIMHLCAISV. 2 residues coordinate ergotamine: aspartate 10 and threonine 15. A DRY motif; important for ligand-induced conformation changes motif is present at residues 27–29; sequence DRY. Residues 27–46 lie on the Cytoplasmic side of the membrane; sequence DRYIAIKKPIQANQYNSRAT. The helical transmembrane segment at 47-60 threads the bilayer; sequence AFIKITVVWLISIG.

It belongs to the G-protein coupled receptor 1 family. As to quaternary structure, interacts (via C-terminus) with MPDZ. In terms of tissue distribution, detected in aorta, renal artery, jugular vein, vena cava and femoral vein.

It is found in the cell membrane. It localises to the synapse. The protein localises to the synaptosome. Functionally, G-protein coupled receptor for 5-hydroxytryptamine (serotonin). Also functions as a receptor for various ergot alkaloid derivatives and psychoactive substances. Ligand binding causes a conformation change that triggers signaling via guanine nucleotide-binding proteins (G proteins) and modulates the activity of downstream effectors. HTR2B is coupled to G(q)/G(11) G alpha proteins and activates phospholipase C-beta, releasing diacylglycerol (DAG) and inositol 1,4,5-trisphosphate (IP3) second messengers that modulate the activity of phosphatidylinositol 3-kinase and promote the release of Ca(2+) ions from intracellular stores, respectively. Beta-arrestin family members inhibit signaling via G proteins and mediate activation of alternative signaling pathways. Plays a role in the regulation of dopamine and 5-hydroxytryptamine release, 5-hydroxytryptamine uptake and in the regulation of extracellular dopamine and 5-hydroxytryptamine levels, and thereby affects neural activity. May play a role in the perception of pain. Plays a role in the regulation of behavior, including impulsive behavior. Required for normal proliferation of embryonic cardiac myocytes and normal heart development. Protects cardiomyocytes against apoptosis. Plays a role in the adaptation of pulmonary arteries to chronic hypoxia. Plays a role in vasoconstriction. Required for normal osteoblast function and proliferation, and for maintaining normal bone density. Required for normal proliferation of the interstitial cells of Cajal in the intestine. The sequence is that of 5-hydroxytryptamine receptor 2B (HTR2B) from Sus scrofa (Pig).